An 836-amino-acid polypeptide reads, in one-letter code: Glutamate receptor ionotropic, kainate 1 (836 aa).

A signal peptide spans 1-30; it reads MERGTVLIQPGLWTRDTSWTLLYFLCYILP. At 31-561 the chain is on the extracellular side; the sequence is QTSPQVLRIG…VFSFLNPLSP (531 aa). N-linked (GlcNAc...) asparagine glycosylation is found at Asn-68, Asn-74, Asn-276, Asn-379, Asn-413, Asn-424, and Asn-431. L-glutamate contacts are provided by Pro-516, Thr-518, and Arg-523. The N-linked (GlcNAc...) asparagine glycan is linked to Asn-546. The chain crosses the membrane as a helical span at residues 562–582; that stretch reads DIWMYVLLACLGVSCVLFVIA. Residues 583–638 are Cytoplasmic-facing; that stretch reads RFTPYEWYNPHPCNPDSDVVENNFTLLNSFWFGVGALMQQGSELMPKALSTRIVGG. The chain crosses the membrane as a helical span at residues 639–659; the sequence is IWWFFTLIIISSYTANLAAFL. Topologically, residues 660-721 are extracellular; sequence TVERMESPID…RQPSALGVEN (62 aa). Residues Ser-689 and Thr-690 each contribute to the L-glutamate site. A helical membrane pass occupies residues 722 to 742; sequence IGGIFIVLAAGLVLSVFVAIG. Over 743 to 836 the chain is Cytoplasmic; the sequence is EFIYKSRKNN…RRTQRKETVA (94 aa).

Belongs to the glutamate-gated ion channel (TC 1.A.10.1) family. GRIK1 subfamily. In terms of assembly, homotetramer or heterotetramer of pore-forming glutamate receptor subunits. Tetramers may be formed by the dimerization of dimers. Can form functional heteromeric receptors with GRIK4 and GRIK5. Interacts with KLHL17. In terms of tissue distribution, most abundant in the cerebellum. Also present in the suprachiasmatic nuclei of the hypothalamus.

Its subcellular location is the cell membrane. The protein localises to the postsynaptic cell membrane. The enzyme catalyses Ca(2+)(in) = Ca(2+)(out). In terms of biological role, ionotropic glutamate receptor that functions as a cation-permeable ligand-gated ion channel, gated by L-glutamate and the glutamatergic agonist kainic acid. L-glutamate acts as an excitatory neurotransmitter at many synapses in the central nervous system. Binding of the excitatory neurotransmitter L-glutamate induces a conformation change, leading to the opening of the cation channel, and thereby converts the chemical signal to an electrical impulse. The receptor then desensitizes rapidly and enters a transient inactive state, characterized by the presence of bound agonist. The protein is Glutamate receptor ionotropic, kainate 1 (Grik1) of Mus musculus (Mouse).